A 269-amino-acid chain; its full sequence is Regulatory protein RecX (269 aa).

It belongs to the RecX family.

The protein localises to the cytoplasm. In terms of biological role, modulates RecA activity. This chain is Regulatory protein RecX, found in Geobacillus kaustophilus (strain HTA426).